The following is a 381-amino-acid chain: Alkanesulfonate monooxygenase (381 aa).

Belongs to the SsuD family. In terms of assembly, homotetramer.

It carries out the reaction an alkanesulfonate + FMNH2 + O2 = an aldehyde + FMN + sulfite + H2O + 2 H(+). Catalyzes the desulfonation of aliphatic sulfonates. The sequence is that of Alkanesulfonate monooxygenase from Shigella flexneri serotype 5b (strain 8401).